Here is a 383-residue protein sequence, read N- to C-terminus: ATP phosphoribosyltransferase regulatory subunit (383 aa).

This sequence belongs to the class-II aminoacyl-tRNA synthetase family. HisZ subfamily. In terms of assembly, heteromultimer composed of HisG and HisZ subunits.

Its subcellular location is the cytoplasm. The protein operates within amino-acid biosynthesis; L-histidine biosynthesis; L-histidine from 5-phospho-alpha-D-ribose 1-diphosphate: step 1/9. Functionally, required for the first step of histidine biosynthesis. May allow the feedback regulation of ATP phosphoribosyltransferase activity by histidine. This chain is ATP phosphoribosyltransferase regulatory subunit, found in Cupriavidus taiwanensis (strain DSM 17343 / BCRC 17206 / CCUG 44338 / CIP 107171 / LMG 19424 / R1) (Ralstonia taiwanensis (strain LMG 19424)).